Here is a 251-residue protein sequence, read N- to C-terminus: Cell division protein ZapD (251 aa).

It belongs to the ZapD family. Interacts with FtsZ.

It is found in the cytoplasm. In terms of biological role, cell division factor that enhances FtsZ-ring assembly. Directly interacts with FtsZ and promotes bundling of FtsZ protofilaments, with a reduction in FtsZ GTPase activity. This Nitrosomonas eutropha (strain DSM 101675 / C91 / Nm57) protein is Cell division protein ZapD.